A 235-amino-acid polypeptide reads, in one-letter code: Glycerol-3-phosphate acyltransferase (235 aa).

The next 6 membrane-spanning stretches (helical) occupy residues Leu-4–Gly-24, Thr-56–Phe-76, Leu-94–Gly-114, Ile-126–Phe-146, Val-152–Phe-172, and Ser-194–His-214.

Belongs to the PlsY family. Probably interacts with PlsX.

Its subcellular location is the cell inner membrane. It carries out the reaction an acyl phosphate + sn-glycerol 3-phosphate = a 1-acyl-sn-glycero-3-phosphate + phosphate. It functions in the pathway lipid metabolism; phospholipid metabolism. In terms of biological role, catalyzes the transfer of an acyl group from acyl-phosphate (acyl-PO(4)) to glycerol-3-phosphate (G3P) to form lysophosphatidic acid (LPA). This enzyme utilizes acyl-phosphate as fatty acyl donor, but not acyl-CoA or acyl-ACP. This chain is Glycerol-3-phosphate acyltransferase, found in Chlorobium phaeovibrioides (strain DSM 265 / 1930) (Prosthecochloris vibrioformis (strain DSM 265)).